Consider the following 72-residue polypeptide: DNA-directed RNA polymerase subunit Rpo10 (72 aa).

Zn(2+) is bound by residues C7, C10, C45, and C46.

The protein belongs to the archaeal Rpo10/eukaryotic RPB10 RNA polymerase subunit family. As to quaternary structure, part of the RNA polymerase complex. Zn(2+) serves as cofactor.

The protein resides in the cytoplasm. It catalyses the reaction RNA(n) + a ribonucleoside 5'-triphosphate = RNA(n+1) + diphosphate. DNA-dependent RNA polymerase (RNAP) catalyzes the transcription of DNA into RNA using the four ribonucleoside triphosphates as substrates. This chain is DNA-directed RNA polymerase subunit Rpo10, found in Methanopyrus kandleri (strain AV19 / DSM 6324 / JCM 9639 / NBRC 100938).